We begin with the raw amino-acid sequence, 757 residues long: Polyribonucleotide nucleotidyltransferase (757 aa).

Positions 482 and 488 each coordinate Mg(2+). Residues 549-608 (PRMLSFYIDKDKISAAIGSKGKNIRSVCERSNAKIEIGDDGKVSVFATSGTEAEIAKSMM) form the KH domain. The S1 motif domain occupies 618 to 686 (GSIVDVKVVR…KGGCPKLSRR (69 aa)). The segment at 698-757 (GELYNEERKDGPNDRDNYYNNSFSRKPGGSHHKRPPRPHSGFSNRNRPKFGNNDSSSGFY) is disordered. Residues 702 to 714 (NEERKDGPNDRDN) are compositionally biased toward basic and acidic residues. The segment covering 725-734 (GGSHHKRPPR) has biased composition (basic residues).

Belongs to the polyribonucleotide nucleotidyltransferase family. It depends on Mg(2+) as a cofactor.

The protein localises to the cytoplasm. It catalyses the reaction RNA(n+1) + phosphate = RNA(n) + a ribonucleoside 5'-diphosphate. Involved in mRNA degradation. Catalyzes the phosphorolysis of single-stranded polyribonucleotides processively in the 3'- to 5'-direction. The protein is Polyribonucleotide nucleotidyltransferase of Wolbachia pipientis wMel.